The chain runs to 402 residues: Phosphoglycerate kinase (402 aa).

Residues 24–26 (DFN), R41, 64–67 (HMGR), R123, and R156 each bind substrate. ATP is bound by residues K207, G298, E329, and 358-361 (GGDS).

This sequence belongs to the phosphoglycerate kinase family. In terms of assembly, monomer.

Its subcellular location is the cytoplasm. It catalyses the reaction (2R)-3-phosphoglycerate + ATP = (2R)-3-phospho-glyceroyl phosphate + ADP. It functions in the pathway carbohydrate degradation; glycolysis; pyruvate from D-glyceraldehyde 3-phosphate: step 2/5. The protein is Phosphoglycerate kinase of Microcystis aeruginosa (strain NIES-843 / IAM M-2473).